Reading from the N-terminus, the 385-residue chain is Glucose-fructose oxidoreductase domain-containing protein 2 (385 aa).

The N-terminal stretch at 1–25 (MKMLPGVGVFGTGSSARVLVPLLRA) is a signal peptide.

The protein belongs to the Gfo/Idh/MocA family.

The protein localises to the secreted. Its subcellular location is the extracellular space. The protein resides in the extracellular matrix. Functionally, promotes matrix assembly. In Homo sapiens (Human), this protein is Glucose-fructose oxidoreductase domain-containing protein 2 (GFOD2).